The sequence spans 167 residues: T-cell surface glycoprotein CD3 delta chain (167 aa).

Positions 1–21 are cleaved as a signal peptide; sequence MEHSRCLSCLILAALLSQVNP. At 22–100 the chain is on the extracellular side; the sequence is RALEVLEAED…NCVELDSATL (79 aa). Cysteine 37 and cysteine 73 are oxidised to a cystine. 2 N-linked (GlcNAc...) asparagine glycosylation sites follow: asparagine 38 and asparagine 55. Residues 101–121 traverse the membrane as a helical segment; that stretch reads AGLIITDIIATVLLALGVYCF. Over 122–167 the chain is Cytoplasmic; sequence AGHETGRFSRAADTQVLMGNDQLYQPLRERNDAQYSRLGDKWARNK. An ITAM domain is found at 134-162; the sequence is DTQVLMGNDQLYQPLRERNDAQYSRLGDK. Tyrosine 145 and tyrosine 156 each carry phosphotyrosine.

In terms of assembly, the TCR-CD3 complex is composed of a CD3D/CD3E and a CD3G/CD3E heterodimers that preferentially associate with TCRalpha and TCRbeta, respectively, to form TCRalpha/CD3E/CD3G and TCRbeta/CD3G/CD3E trimers. In turn, the hexamer interacts with CD3Z homodimer to form the TCR-CD3 complex. Alternatively, TCRalpha and TCRbeta can be replaced by TCRgamma and TCRdelta. Interacts with coreceptors CD4 and CD8. Phosphorylated on Tyr residues after T-cell receptor triggering by LCK in association with CD4/CD8. CD3D is mostly present on T-lymphocytes with its TCR-CD3 partners. Present also in fetal NK-cells.

It is found in the cell membrane. Functionally, part of the TCR-CD3 complex present on T-lymphocyte cell surface that plays an essential role in adaptive immune response. When antigen presenting cells (APCs) activate T-cell receptor (TCR), TCR-mediated signals are transmitted across the cell membrane by the CD3 chains CD3D, CD3E, CD3G and CD3Z. All CD3 chains contain immunoreceptor tyrosine-based activation motifs (ITAMs) in their cytoplasmic domain. Upon TCR engagement, these motifs become phosphorylated by Src family protein tyrosine kinases LCK and FYN, resulting in the activation of downstream signaling pathways. In addition of this role of signal transduction in T-cell activation, CD3D plays an essential role in thymocyte differentiation. Indeed, participates in correct intracellular TCR-CD3 complex assembly and surface expression. In absence of a functional TCR-CD3 complex, thymocytes are unable to differentiate properly. Interacts with CD4 and CD8 and thus serves to establish a functional link between the TCR and coreceptors CD4 and CD8, which is needed for activation and positive selection of CD4 or CD8 T-cells. This chain is T-cell surface glycoprotein CD3 delta chain (CD3D), found in Ovis aries (Sheep).